The sequence spans 299 residues: MKALWAVLVVTLLAGCRADVQPELEMQEPALWQSGQPWELALGRFWDYLRWVQTLSDQVQEELLNSQVTQELTVLMEDTMKEVKAYKNELEEELGPVAEDTKARLSKELQGAQARLRADMEEVRNRLAHYSEEMQVMLGQSPDELRARLGSHLRKLRKRLLRDAEDLQKRLAVYKAGAREGAERGVSAIRERLGSLVEQSRVRAALTGQPLRERAQAWGERLRGRLEEVGGRARDRLDEVREQMEEVRAKVEEQAEAFQARLKGWFEPMMEDMRRQWADLIEKVQLAVGASTPVPSEDH.

Positions 1–18 (MKALWAVLVVTLLAGCRA) are cleaved as a signal peptide. Tandem repeats lie at residues 74 to 95 (VLME…EELG), 96 to 117 (PVAE…ARLR), 118 to 139 (ADME…VMLG), 140 to 161 (QSPD…KRLL), 162 to 183 (RDAE…EGAE), 184 to 205 (RGVS…VRAA), 206 to 223 (LTGQ…ERLR), and 224 to 245 (GRLE…EQME). Positions 74-245 (VLMEDTMKEV…RLDEVREQME (172 aa)) are 8 X 22 AA approximate tandem repeats. The tract at residues 152-162 (HLRKLRKRLLR) is LDL and other lipoprotein receptors binding. 156–159 (LRKR) is a heparin binding site. A lipid-binding and lipoprotein association region spans residues 204 to 273 (AALTGQPLRE…GWFEPMMEDM (70 aa)). A heparin-binding site is contributed by 219–226 (GERLRGRL). The specificity for association with VLDL stretch occupies residues 261-273 (RLKGWFEPMMEDM).

The protein belongs to the apolipoprotein A1/A4/E family. As to quaternary structure, homotetramer. May interact with ABCA1; functionally associated with ABCA1 in the biogenesis of HDLs. May interact with APP/A4 amyloid-beta peptide; the interaction is extremely stable in vitro but its physiological significance is unclear. May interact with MAPT. May interact with MAP2. In the cerebrospinal fluid, interacts with secreted SORL1. Interacts with PMEL; this allows the loading of PMEL luminal fragment on ILVs to induce fibril nucleation. Post-translationally, APOE exists as multiple glycosylated and sialylated glycoforms within cells and in plasma. The extent of glycosylation and sialylation are tissue and context specific. Glycated in plasma VLDL. In terms of processing, phosphorylated by FAM20C in the extracellular medium.

It localises to the secreted. Its subcellular location is the extracellular space. The protein localises to the extracellular matrix. It is found in the extracellular vesicle. The protein resides in the endosome. It localises to the multivesicular body. In terms of biological role, APOE is an apolipoprotein, a protein associating with lipid particles, that mainly functions in lipoprotein-mediated lipid transport between organs via the plasma and interstitial fluids. APOE is a core component of plasma lipoproteins and is involved in their production, conversion and clearance. Apolipoproteins are amphipathic molecules that interact both with lipids of the lipoprotein particle core and the aqueous environment of the plasma. As such, APOE associates with chylomicrons, chylomicron remnants, very low density lipoproteins (VLDL) and intermediate density lipoproteins (IDL) but shows a preferential binding to high-density lipoproteins (HDL). It also binds a wide range of cellular receptors including the LDL receptor/LDLR and the very low-density lipoprotein receptor/VLDLR that mediate the cellular uptake of the APOE-containing lipoprotein particles. Finally, APOE also has a heparin-binding activity and binds heparan-sulfate proteoglycans on the surface of cells, a property that supports the capture and the receptor-mediated uptake of APOE-containing lipoproteins by cells. In Heterocephalus glaber (Naked mole rat), this protein is Apolipoprotein E (APOE).